Here is a 200-residue protein sequence, read N- to C-terminus: Small ribosomal subunit protein uS4 (200 aa).

The segment covering 1 to 13 (MARYRGPKQKIAR) has biased composition (basic residues). Residues 1–44 (MARYRGPKQKIARRFKEPIFGPSKALERKPYPPGQHGQSRRRRE) are disordered. Positions 92-154 (ARLDNTVFRM…SQDLEVIQTN (63 aa)) constitute an S4 RNA-binding domain.

Belongs to the universal ribosomal protein uS4 family. As to quaternary structure, part of the 30S ribosomal subunit. Contacts protein S5. The interaction surface between S4 and S5 is involved in control of translational fidelity.

In terms of biological role, one of the primary rRNA binding proteins, it binds directly to 16S rRNA where it nucleates assembly of the body of the 30S subunit. Its function is as follows. With S5 and S12 plays an important role in translational accuracy. The protein is Small ribosomal subunit protein uS4 of Salinibacter ruber (strain DSM 13855 / M31).